A 430-amino-acid chain; its full sequence is Serine--tRNA ligase (430 aa).

237-239 (TAE) contributes to the L-serine binding site. 268–270 (RSE) is an ATP binding site. Glu291 provides a ligand contact to L-serine. 355–358 (EISS) lines the ATP pocket. Residue Ser391 coordinates L-serine.

This sequence belongs to the class-II aminoacyl-tRNA synthetase family. Type-1 seryl-tRNA synthetase subfamily. Homodimer. The tRNA molecule binds across the dimer.

The protein resides in the cytoplasm. It carries out the reaction tRNA(Ser) + L-serine + ATP = L-seryl-tRNA(Ser) + AMP + diphosphate + H(+). The catalysed reaction is tRNA(Sec) + L-serine + ATP = L-seryl-tRNA(Sec) + AMP + diphosphate + H(+). It participates in aminoacyl-tRNA biosynthesis; selenocysteinyl-tRNA(Sec) biosynthesis; L-seryl-tRNA(Sec) from L-serine and tRNA(Sec): step 1/1. In terms of biological role, catalyzes the attachment of serine to tRNA(Ser). Is also able to aminoacylate tRNA(Sec) with serine, to form the misacylated tRNA L-seryl-tRNA(Sec), which will be further converted into selenocysteinyl-tRNA(Sec). The chain is Serine--tRNA ligase from Shigella dysenteriae serotype 1 (strain Sd197).